The chain runs to 65 residues: MVSVQVNENESIDKLLKRFKKKYERAGVLKEFRKKAYFVKPSIEKRLKRSRSKRRAQRANEERNS.

Basic residues predominate over residues 46–57 (RLKRSRSKRRAQ). The segment at 46 to 65 (RLKRSRSKRRAQRANEERNS) is disordered.

Belongs to the bacterial ribosomal protein bS21 family.

This is Small ribosomal subunit protein bS21 from Chlorobaculum tepidum (strain ATCC 49652 / DSM 12025 / NBRC 103806 / TLS) (Chlorobium tepidum).